The following is a 1380-amino-acid chain: MEPFAFGRGAPALCILTAAARINLDNFVPCCWALFRLSFFFPLDPAYIRNENKETRTSWISIEFFFFVKHCLSQHTFFSKTLAPKRNFRAKKLKDIGDTRIDRADKDFLLVPEPSMFVNGNQSNFAKPAGQGILPIPKKSRIIKTDKPRPFLCPTCTRGFVRQEHLKRHQHSHTREKPYLCIFCGRCFARRDLVLRHQQKLHAALVGTGDPRRMTPAPNSTSSFASKRRHSVAADDPTDLHIIKIAGNKETILPTPKNLAGKTSEELKEAVVALAKSNNVELPVSAPVMNDKREKTPPSKAGSLGFREFKFSTKGVPVHSASSDAVIDRANTPSSMHKTKRHASFSASSAMTYMSSSNSPHHSITNFELVEDAPHQVGFSTPQMTAKQLMESVSELDLPPLTLDEPPQAIKFNLNLFNNDPSGQQQQQQQQQQNSTSSTIVNSNNGSTVATPGVYLLSSGPSLTDLLTMNSAHAGAGGYMSSHHSPFDLGCFSHDKPTVSEFNLPSSFPNTIPSNSTTASNSYSNLANQTYRQMSNEQPLMSLSPKNPPTTVSDSSSTINFNPGTNNLLEPSMEPNDKDSNIDPAAIDDKWLSEFINNSDPKSTFKINFNHFNDIGFIYSPPSSRSSIPNKSPPNHSATSLNHEKASLSPRLNLSLNGSTDLPSTPQNQLKEPSYSDPISHSSHKRRRDSVMMDYDLSNFFSSRQLDISKVLNGTEQNNSHVNDDVLTLSFPGETDSNATQKQLPVLTPSDLLSPFSVPSVSQVLFTNELRSMMLADNNIDSGAFPTTSQLNDYVTYYKEEFHPFFSFIHLPSIIPNMDSYPLLLSISMVGALYGFHSTHAKVLANAASTQIRKSLKVSEKNPETTELWVIQTLVLLTFYCIFNKNTAVIKGMHGQLTTIIRLLKASRLNLPLESLCQPPIESDHIMEYENSPHMFSKIREQYNAPNQMNKNYQYFVLAQSRIRTCHAVLLISNLFSSLVGADCCFHSVDLKCGVPCYKEELYQCRNSDEWSDLLCQYKITLDSKFSLIELSNGNEAYENCLRFLSTGDSFFYGNARVSLSTCLSLLISIHEKILIERNNARISNNNTNSNNIELDDIEWKMTSRQRIDTMLKYWENLYLKNGGILTPTENSMSTINANPAMRLIIPVYLFAKMRRCLDLAHVIEKIWLKDWSNMNKALEEVCYDMGSLREATEYALNMVDAWTSFFTYIKQGKRRIFNTPVFATTCMFTAVLVISEYMKCVEDWARGYNANNPNSALLDFSDRVLWLKAERILRRLQMNLIPKECDVLKSYTDFLRWQDKDALDLSALNEEQAQRAMDPNTDINETIQLIVAASLSSKCLYLGVQILGDAPIWPIILSFAHGLQSRAIYSVTKKRNTRI.

C2H2-type zinc fingers lie at residues 151–173 (FLCP…QHSH) and 179–202 (YLCI…QKLH). The segment at 208–231 (TGDPRRMTPAPNSTSSFASKRRHS) is disordered. Phosphoserine is present on residues Ser-231 and Ser-322. 4 disordered regions span residues 413 to 445 (NLNL…NSNN), 544 to 584 (SPKN…NIDP), 624 to 643 (SRSS…SLNH), and 652 to 688 (LNLS…KRRR). A compositionally biased stretch (low complexity) spans 424 to 445 (QQQQQQQQQQNSTSSTIVNSNN). A Phosphoserine modification is found at Ser-544. Over residues 544–569 (SPKNPPTTVSDSSSTINFNPGTNNLL) the composition is skewed to polar residues. Positions 575–584 (PNDKDSNIDP) are enriched in basic and acidic residues. Low complexity predominate over residues 624–634 (SRSSIPNKSPP). Ser-632 bears the Phosphoserine mark. The span at 652–681 (LNLSLNGSTDLPSTPQNQLKEPSYSDPISH) shows a compositional bias: polar residues.

The protein belongs to the RSF2/TDA9 family.

Its subcellular location is the nucleus. In terms of biological role, transcription factor that regulates expression of both nuclear and mitochondrial genes, and more specifically those required for glycerol-based growth and respiration. In Saccharomyces cerevisiae (strain ATCC 204508 / S288c) (Baker's yeast), this protein is Respiration factor 2 (RSF2).